We begin with the raw amino-acid sequence, 113 residues long: U11-theraphotoxin-Hhn1a (113 aa).

A signal peptide spans 1 to 21 (MNTVRVAFLLVFVLAVSLGQA). The propeptide occupies 22–74 (DKDENRMEMQEKTEQGKSYLDFAENLLLQKLEEPEAKLLEEDSEESRNSRQKR). The span at 58 to 69 (KLLEEDSEESRN) shows a compositional bias: basic and acidic residues. The tract at residues 58-83 (KLLEEDSEESRNSRQKRCIGEGVPCD) is disordered. 3 cysteine pairs are disulfide-bonded: C75-C90, C82-C95, and C89-C110.

The protein belongs to the neurotoxin 14 (magi-1) family. 01 (HNTX-16) subfamily. Expressed by the venom gland.

The protein localises to the secreted. Probable ion channel inhibitor. This is U11-theraphotoxin-Hhn1a from Cyriopagopus hainanus (Chinese bird spider).